The sequence spans 361 residues: Holliday junction branch migration complex subunit RuvB (361 aa).

The tract at residues 1–181 (MKDQRLLDSV…FGIPIRLNFY (181 aa)) is large ATPase domain (RuvB-L). Residues Leu-20, Arg-21, Gly-62, Lys-65, Thr-66, Thr-67, 128–130 (EDY), Arg-171, Tyr-181, and Arg-218 each bind ATP. Thr-66 contributes to the Mg(2+) binding site. The tract at residues 182 to 252 (TIEELEYIVQ…VADEALSRLE (71 aa)) is small ATPAse domain (RuvB-S). A head domain (RuvB-H) region spans residues 255-361 (HLGLDPLDRR…QTTLWDEADE (107 aa)). Arg-291, Arg-310, and Arg-315 together coordinate DNA.

It belongs to the RuvB family. As to quaternary structure, homohexamer. Forms an RuvA(8)-RuvB(12)-Holliday junction (HJ) complex. HJ DNA is sandwiched between 2 RuvA tetramers; dsDNA enters through RuvA and exits via RuvB. An RuvB hexamer assembles on each DNA strand where it exits the tetramer. Each RuvB hexamer is contacted by two RuvA subunits (via domain III) on 2 adjacent RuvB subunits; this complex drives branch migration. In the full resolvosome a probable DNA-RuvA(4)-RuvB(12)-RuvC(2) complex forms which resolves the HJ.

Its subcellular location is the cytoplasm. The enzyme catalyses ATP + H2O = ADP + phosphate + H(+). Its function is as follows. The RuvA-RuvB-RuvC complex processes Holliday junction (HJ) DNA during genetic recombination and DNA repair, while the RuvA-RuvB complex plays an important role in the rescue of blocked DNA replication forks via replication fork reversal (RFR). RuvA specifically binds to HJ cruciform DNA, conferring on it an open structure. The RuvB hexamer acts as an ATP-dependent pump, pulling dsDNA into and through the RuvAB complex. RuvB forms 2 homohexamers on either side of HJ DNA bound by 1 or 2 RuvA tetramers; 4 subunits per hexamer contact DNA at a time. Coordinated motions by a converter formed by DNA-disengaged RuvB subunits stimulates ATP hydrolysis and nucleotide exchange. Immobilization of the converter enables RuvB to convert the ATP-contained energy into a lever motion, pulling 2 nucleotides of DNA out of the RuvA tetramer per ATP hydrolyzed, thus driving DNA branch migration. The RuvB motors rotate together with the DNA substrate, which together with the progressing nucleotide cycle form the mechanistic basis for DNA recombination by continuous HJ branch migration. Branch migration allows RuvC to scan DNA until it finds its consensus sequence, where it cleaves and resolves cruciform DNA. This chain is Holliday junction branch migration complex subunit RuvB, found in Bartonella quintana (strain Toulouse) (Rochalimaea quintana).